A 154-amino-acid polypeptide reads, in one-letter code: Major allergen Api g 1, isoallergen 1 (154 aa).

This sequence belongs to the BetVI family.

This Apium graveolens (Celery) protein is Major allergen Api g 1, isoallergen 1.